We begin with the raw amino-acid sequence, 591 residues long: ATPase family AAA domain-containing protein 3A (591 aa).

The disordered stretch occupies residues 1–52 (MSWLFGIKGPKGEGTGPPLPLPPAQPGAEGGGDRGAGDRPSPKDKWSNFDPT). Serine 2 is subject to N-acetylserine. Positions 2-49 (SWLFGIKGPKGEGTGPPLPLPPAQPGAEGGGDRGAGDRPSPKDKWSNF) are required for interaction with the inner surface of the mitochondrial outer membrane. At 2-245 (SWLFGIKGPK…FRAFVTDWDK (244 aa)) the chain is on the mitochondrial intermembrane side. Positions 31 to 47 (GGDRGAGDRPSPKDKWS) are enriched in basic and acidic residues. The stretch at 55 to 216 (ERAAKAAREL…REQIRLKAAE (162 aa)) forms a coiled coil. A helical membrane pass occupies residues 246–263 (VTATVAGLTLLAVGVYSA). Residues 264 to 586 (KNATSVAGRY…DSQTNKPPHP (323 aa)) lie on the Mitochondrial matrix side of the membrane. An S100B-binding region spans residues 289–304 (RISVLEALRHPIQVSR). ATP is bound at residue 351–358 (GPPGTGKT). Lysine 490 bears the N6-acetyllysine; alternate mark. Lysine 490 carries the N6-succinyllysine; alternate modification. 2 positions are modified to N6-acetyllysine: lysine 494 and lysine 512. Residues 572-591 (KVERPDSQTNKPPHPSLLSC) form a disordered region.

Belongs to the AAA ATPase family. As to quaternary structure, can form homooligomers. Homodimer formation at the N-terminus may be regulated by ATP and is required for the interaction with the inner surface of the mitochondrial outer membrane and correct mitochondrial homeostasis. Interacts with components of the mitochondrial ribosome and with other proteins involved in mitochondrial RNA metabolism. May also interact with protein involved in lipid metabolism, including STARD9. May interact with FAM210A. Interacts with GADD45GIP1. Interacts with S100B in a Ca(+2)- and Zn(+2)-dependent manner; this interaction probably occurs in the cytosol prior to mitochondrial targeting. S100B could assist ATAD3A cytoplasmic processing, preventing aggregation and favoring mitochondrial localization. Interacts with HSP60/HSPD1. Interacts with CLPB. Interacts with EIF2AK3/PERK; ATAD3A and EIF2S1/eIF-2-alpha occupy a common binding site within the cytoplasmic loop of EIF2AK3/PERK, leading to prevent EIF2AK3/PERK association with its substrate EIF2S1/eIF-2-alpha. In terms of tissue distribution, expressed in heart, spleen, kidney, liver and at smaller levels, in lung and muscle (at protein level).

It is found in the mitochondrion inner membrane. Its subcellular location is the mitochondrion matrix. It localises to the mitochondrion nucleoid. It catalyses the reaction ATP + H2O = ADP + phosphate + H(+). Essential for mitochondrial network organization, mitochondrial metabolism and cell growth at organism and cellular level. May play an important role in mitochondrial protein synthesis. May also participate in mitochondrial DNA replication. May bind to mitochondrial DNA D-loops and contribute to nucleoid stability. Required for enhanced channeling of cholesterol for hormone-dependent steroidogenesis. Involved in mitochondrial-mediated antiviral innate immunity. Required to protect mitochondria from the PERK-mediated unfolded protein response: specifically inhibits the activity of EIF2AK3/PERK at mitochondria-endoplasmic reticulum contact sites, thereby providing a safe haven for mitochondrial protein translation during endoplasmic reticulum stress. Ability to inhibit EIF2AK3/PERK is independent of its ATPase activity. Also involved in the mitochondrial DNA damage response by promoting signaling between damaged genomes and the mitochondrial membrane, leading to activation of the integrated stress response (ISR). This Mus musculus (Mouse) protein is ATPase family AAA domain-containing protein 3A (Atad3a).